The sequence spans 179 residues: Prion-like protein doppel (179 aa).

Residues 1-25 (MKNRLGTWWVAILCMLLASHLSTVK) form the signal peptide. The segment at 27-50 (RGIKHRFKWNRKVLPSSGGQITEA) is flexible tail. The interval 51–155 (RVAENRPGAF…KHCDFWLERG (105 aa)) is globular. 2 disulfides stabilise this stretch: C95–C148 and C109–C143. N-linked (GlcNAc...) asparagine glycosylation is found at N99 and N111. A cu(2+) binding region spans residues 125-142 (KQDSKLHQRVLWRLIKEI). The GPI-anchor amidated glycine moiety is linked to residue G155. Residues 156-179 (AALRVAVDQPAMVCLLGFVWFIVK) constitute a propeptide, removed in mature form.

The protein belongs to the prion family. Post-translationally, N-glycosylated. N-glycosylated at two distinct sites. In terms of processing, O-glycosylated. Detected in testis. Detected within seminiferous tubules, on round and elongated spermatids (at protein level). Not detected in brain (at protein level). Detected in testis, and at low levels in heart. Expression in brain is very low and barely detectable.

The protein resides in the cell membrane. Functionally, required for normal acrosome reaction and for normal male fertility. Can bind Cu(2+). The polypeptide is Prion-like protein doppel (Prnd) (Mus musculus (Mouse)).